The sequence spans 756 residues: Cartilage oligomeric matrix protein (756 aa).

The N-terminal stretch at 1–20 (MVLAAARVLLLTLAALGASG) is a signal peptide. Positions 22 to 85 (GQMPLGGDLG…PARTPKLTVR (64 aa)) are COMP N-terminal. Residues 86 to 125 (PLSQCSPGFCFPGVACTETANGARCGPCPEGFTGNGSHCA) enclose the EGF-like 1 domain. 10 cysteine pairs are disulfide-bonded: Cys-90/Cys-101, Cys-95/Cys-110, Cys-113/Cys-124, Cys-130/Cys-141, Cys-135/Cys-150, Cys-183/Cys-196, Cys-190/Cys-205, Cys-228/Cys-242, Cys-236/Cys-252, and Cys-254/Cys-265. N-linked (GlcNAc...) asparagine glycosylation is present at Asn-120. The EGF-like 2; calcium-binding domain occupies 126–178 (DVNECTAHPCFPRVRCINTSPGFRCEACPPGFSGPTHEGVGLAFAKANKQVCT). The region spanning 179 to 218 (DINECETGQHNCVPNSVCVNTVGSFQCGPCQPGFVGDQAS) is the EGF-like 3; calcium-binding domain. Residues 224–266 (PQRFCPDGTPSPCHEKADCVLERDGSRSCVCAVGWAGNGLICG) form the EGF-like 4 domain. 8 TSP type-3 repeats span residues 267–299 (RDTDLDGFPDEKLRCSERQCRKDNCVTVPNSGQ), 300–335 (EDVDQDGIGDACDPDADGDGVLNEKDNCPLVRNPDQ), 336–358 (RNTDGDKWGDACDNCRSQKNDDQ), 359–394 (KDTDKDGRGDACDDDIDGDRIRNPVDNCPKVPNSDQ), 395–417 (KDTDGDGVGDACDNCPQKSNADQ), 418–455 (RDVDHDFVGDACDSDQDQDGDGHQDSKDNCPTVPNSAQ), 456–491 (QDSDHDGQGDACDDDDDNDGVPDSRDNCRLVPNPGQ), and 492–527 (EDMDRDGVGDACQGDFDADKVVDKIDVCPENAEVTL). The segment at 322–502 (NEKDNCPLVR…DMDRDGVGDA (181 aa)) is disordered. Basic and acidic residues-rich tracts occupy residues 333 to 345 (PDQRNTDGDKWGD), 351 to 369 (RSQKNDDQKDTDKDGRGDA), and 415 to 425 (ADQRDVDHDFV). A Cell attachment site motif is present at residues 366–368 (RGD). The span at 466–475 (ACDDDDDNDG) shows a compositional bias: acidic residues. Residues 526 to 756 (TLTDFRAFQT…DYEAQRLLQA (231 aa)) form a mediates cell survival and induction of the IAP family of survival proteins region. One can recognise a TSP C-terminal domain in the interval 531 to 745 (RAFQTVVLDP…LRYRCNDTIP (215 aa)). N-linked (GlcNAc...) asparagine glycosylation occurs at Asn-741.

The protein belongs to the thrombospondin family. In terms of assembly, pentamer; disulfide-linked. Exists in a more compact conformation in the presence of calcium and shows a more extended conformation in the absence of calcium. Interacts with ITGB3, ITGA5 and FN1. Binding to FN1 requires the presence of divalent cations (Ca(2+), Mg(2+) or Mn(2+)). The greatest amount of binding is seen in the presence of Mn(2+). Interacts with MATN1, MATN3, MATN4 and ACAN. Binds heparin, heparan sulfate and chondroitin sulfate. EDTA dimishes significantly its binding to ACAN and abolishes its binding to MATN3, MATN4 and chondroitin sulfate. Interacts with collagen I, II and IX, and interaction with these collagens is dependent on the presence of zinc ions. Interacts with ADAMTS12. Interacts with ITGA7. The cofactor is Ca(2+). Post-translationally, proteolytically cleaved by metalloproteases ADAMTS4 and ADAMTS1 with ADAMTS4 showing more potent activity.

The protein localises to the secreted. Its subcellular location is the extracellular space. It is found in the extracellular matrix. In terms of biological role, plays a role in the structural integrity of cartilage via its interaction with other extracellular matrix proteins such as the collagens and fibronectin. Can mediate the interaction of chondrocytes with the cartilage extracellular matrix through interaction with cell surface integrin receptors. Could play a role in the pathogenesis of osteoarthritis. Potent suppressor of apoptosis in both primary chondrocytes and transformed cells. Suppresses apoptosis by blocking the activation of caspase-3 and by inducing the IAP family of survival proteins (BIRC3, BIRC2, BIRC5 and XIAP). Essential for maintaining a vascular smooth muscle cells (VSMCs) contractile/differentiated phenotype under physiological and pathological stimuli. Maintains this phenotype of VSMCs by interacting with ITGA7. The polypeptide is Cartilage oligomeric matrix protein (COMP) (Bos taurus (Bovine)).